A 453-amino-acid chain; its full sequence is Plasticin (453 aa).

A head region spans residues Met-1–Pro-51. Positions Phe-71–Tyr-112 are coil 1A. Residues Glu-77–Ile-390 form the IF rod domain. The segment at Lys-113–Leu-126 is linker 1. A coil 1B region spans residues Cys-127–Val-222. The segment at Gln-223 to Thr-245 is linker 12. Residues Gly-246–Val-391 form a coil 2 region. The interval Val-392–Asp-453 is tail. Residues Ile-421–Asp-453 are disordered. Positions Val-424–Asp-453 are enriched in basic and acidic residues.

It belongs to the intermediate filament family. Optic nerve.

Functionally, type III neurofilament. The sequence is that of Plasticin from Carassius auratus (Goldfish).